A 352-amino-acid polypeptide reads, in one-letter code: Phosphoribosylformylglycinamidine cyclo-ligase (352 aa).

Belongs to the AIR synthase family.

It localises to the cytoplasm. It catalyses the reaction 2-formamido-N(1)-(5-O-phospho-beta-D-ribosyl)acetamidine + ATP = 5-amino-1-(5-phospho-beta-D-ribosyl)imidazole + ADP + phosphate + H(+). It functions in the pathway purine metabolism; IMP biosynthesis via de novo pathway; 5-amino-1-(5-phospho-D-ribosyl)imidazole from N(2)-formyl-N(1)-(5-phospho-D-ribosyl)glycinamide: step 2/2. This is Phosphoribosylformylglycinamidine cyclo-ligase from Pseudomonas fluorescens (strain ATCC BAA-477 / NRRL B-23932 / Pf-5).